The following is a 513-amino-acid chain: MNNNVITRFAPSPTGFLHIGSARTALFNYLFARHHNGKFLLRIEDTDKERSTKEAVEAIFSGLKWLGLDWNGEVIFQSKRNNLYKEAALKLLQNGKAYYCFTRQEEIERQRQQALENKQHFIFNSEWRDKDPSIYPTDIKPVIRLKTPREGSITIHDTLQGEVVIENSHIDDMVLLRADGTATYMLAVVVDDHDMGITHIIRGDDHLTNTARQLAIYQAFGYAVPSMTHIPLIHGADGAKLSKRHGALGIEAYKDMGYLPESLCNYLLRLGWSHGDDEIISMTQAIDWFNLDSLGKSPSKLDFAKMNSLNAHYLRMLDNDSLTSKTVEILEQNYNTLLRHLPYREEFGGNTERSTAAYIDIREDASTGLTYKLPLAVELPKKFKISEQEIGYIKQAMPSLLVRSETLLELTRLAQIYLVDSPIIYSQDSKEIIENCDKNLIKQIIENLSELEQFDKESVQNKFKEIAAANDLKLNDIMKPVRALITGMTASPSIFEIAEILGKENILKRLKII.

A 'HIGH' region motif is present at residues Pro-11 to Ser-21. The 'KMSKS' region signature appears at Lys-240 to Arg-244. ATP is bound at residue Lys-243. The RPE1 insert domain maps to Asn-335–Phe-383.

Belongs to the class-I aminoacyl-tRNA synthetase family. Glutamate--tRNA ligase type 1 subfamily. In terms of assembly, monomer.

The protein resides in the cytoplasm. The enzyme catalyses tRNA(Glu) + L-glutamate + ATP = L-glutamyl-tRNA(Glu) + AMP + diphosphate. Its function is as follows. Catalyzes the attachment of glutamate to tRNA(Glu) in a two-step reaction: glutamate is first activated by ATP to form Glu-AMP and then transferred to the acceptor end of tRNA(Glu). This chain is Glutamate--tRNA ligase 2, found in Rickettsia conorii (strain ATCC VR-613 / Malish 7).